A 128-amino-acid chain; its full sequence is Azurin (128 aa).

The Plastocyanin-like domain occupies 1 to 128 (AECKVDVDST…SMMKGAVVLK (128 aa)). Cys3 and Cys26 form a disulfide bridge. The Cu cation site is built by His46, Cys112, His117, and Met121.

The protein resides in the periplasm. In terms of biological role, transfers electrons from cytochrome c551 to cytochrome oxidase. In Pseudomonas chlororaphis (Pseudomonas aureofaciens), this protein is Azurin.